A 368-amino-acid polypeptide reads, in one-letter code: uncharacterized protein (368 aa).

2 disordered regions span residues 1–22 (MEKS…LPEK) and 282–317 (KHLG…EPPA). The segment covering 293–311 (KRVEKMKKAYKESKEEKAS) has biased composition (basic and acidic residues).

This is an uncharacterized protein from Mus musculus (Mouse).